The primary structure comprises 596 residues: Glomulin (596 aa).

Ala2 bears the N-acetylalanine mark. Positions 2-555 (AVEELQSIIK…EEIPSMPPEM (554 aa)) are alpha-helical region with structural similarity to HEAT repeats. The segment at 299-596 (IDQLPMVLSP…STSEENVGIK (298 aa)) is important for interaction with RBX1.

In terms of assembly, interacts with FKBP4 and FKBP1A. Interacts with RBX1 (via RING domain). Identified in complexes that contain RBX1 plus one of the cullins CUL1, CUL2, CUL3, and CUL4A. Identified in a SCF complex composed of CUL1, RBX1, SKP1, FBXW7 and GLMN. Component of a SCF-like complex consisting of CUL7, RBX1, SKP1, FBXW8 and GLMN. Interacts with unphosphorylated MET and is released upon MET phosphorylation. Phosphorylated on tyrosine residues. Ubiquitous. Detected in embryonic vasculature and embryonic perichondrium, and in adult eye, brain, heart, testis, kidney, smooth muscle and skeletal muscle.

Functionally, regulatory component of cullin-RING-based SCF (SKP1-Cullin-F-box protein) E3 ubiquitin-protein ligase complexes. Inhibits E3 ubiquitin ligase activity by binding to the RING domain of RBX1 and inhibiting its interaction with the E2 ubiquitin-conjugating enzyme CDC34. Inhibits RBX1-mediated neddylation of CUL1. Required for normal stability and normal cellular levels of key components of SCF ubiquitin ligase complexes, including FBXW7, RBX1, CUL1, CUL2, CUL3, CUL4A, and thereby contributes to the regulation of CCNE1 and MYC levels. Essential for normal development of the vasculature. Contributes to the regulation of RPS6KB1 phosphorylation. The protein is Glomulin (Glmn) of Mus musculus (Mouse).